Consider the following 638-residue polypeptide: ATP-dependent zinc metalloprotease FtsH (638 aa).

At Met1–Lys15 the chain is on the cytoplasmic side. Residues Pro16–Met36 form a helical membrane-spanning segment. Over Arg37–Asn122 the chain is Periplasmic. A helical membrane pass occupies residues Phe123–Phe143. The Cytoplasmic segment spans residues Met144–Ser638. Gly216–Thr223 contributes to the ATP binding site. Zn(2+) is bound at residue His440. Glu441 is an active-site residue. Positions 444 and 517 each coordinate Zn(2+).

It in the central section; belongs to the AAA ATPase family. In the C-terminal section; belongs to the peptidase M41 family. Homohexamer. The cofactor is Zn(2+).

Its subcellular location is the cell inner membrane. Acts as a processive, ATP-dependent zinc metallopeptidase for both cytoplasmic and membrane proteins. Plays a role in the quality control of integral membrane proteins. The protein is ATP-dependent zinc metalloprotease FtsH of Helicobacter felis (strain ATCC 49179 / CCUG 28539 / NCTC 12436 / CS1).